An 829-amino-acid chain; its full sequence is Ent-cassa-12,15-diene synthase (829 aa).

Residues Met1–Asp50 are disordered. A compositionally biased stretch (polar residues) spans Gly23–Ser37. Residues Asp576, Asp580, Asn720, and Glu728 each contribute to the Mg(2+) site. Positions Asp576–Asp580 match the DDXXD motif motif.

Belongs to the terpene synthase family. It depends on Mg(2+) as a cofactor. Expressed in roots and stems.

The catalysed reaction is ent-copalyl diphosphate = ent-cassa-12,15-diene + diphosphate. Functionally, involved in phytocassane phytoalexins biosynthesis. Catalyzes the conversion of ent-copalyl diphosphate to the phytoalexin precursor ent-cassa-12,15-diene. The polypeptide is Ent-cassa-12,15-diene synthase (KSL7) (Oryza sativa subsp. japonica (Rice)).